The chain runs to 337 residues: Protein RecA (337 aa).

66 to 73 (GPESSGKT) is an ATP binding site.

Belongs to the RecA family.

Its subcellular location is the cytoplasm. Functionally, can catalyze the hydrolysis of ATP in the presence of single-stranded DNA, the ATP-dependent uptake of single-stranded DNA by duplex DNA, and the ATP-dependent hybridization of homologous single-stranded DNAs. It interacts with LexA causing its activation and leading to its autocatalytic cleavage. The chain is Protein RecA from Mesomycoplasma hyopneumoniae (strain 232) (Mycoplasma hyopneumoniae).